The chain runs to 888 residues: MPLKEDDCCLFAEEYDGPPLSYNIPCAVPINVEKIPVAAVVSPVCISDNMSFPVIQPILSVESKKFLIDSVSPTSVIANCGSNQLELVSDSITVSPTSVIEHTEEEEEEEGGDGEDCELSSSGELLLRSCSVKESLDLNESSSNPLVPDWESNESVLSMDYPSSRVTGDCVSETNGDGKKQPVVTFLGIASDDGFEEEESCSNLRRVRVVPVKKQPQTKGKKGSCYRCFKGSRFTEKEVCLVCDAKYCNSCVLRAMGSMPEGRKCVTCIGFPIDESKRGSLGKCSRMLKRLLNDLEVKQIMKTERFCEANQLPAEYVYVNGQPLYPEELVTLQTCSNPPKKLKPGDYWYDKVSGLWGKEGEKPYQIISPHLNVGGPISPEASNGNTQVFINGREITKVELRMLQLAGVQCAGNPHFWVNEDGSYQEEGQKNTKGYIWGKAGTKLLCAVLSLPVPSKSTANASGEQLYSANSRSILDHLEHRTLQKILLVGNSGSGTSTIFKQAKILYKDVPFLEDERENIKVIIQTNVYGYLGMLLEGRERFEEEALALRNTKQCVLENIPADEGDAKSNDKTVTMYSIGPRLKAFSDWLLKTMAAGNLGVIFPAASREYAPLVEELWRDAAIQATYKRRSELGLLPSVASYFLERAIDVLTPDYEPSDLDILYAEGVTSSSGLACLDFSFPQTASEENLDPSDHHDSLLRYQLIRVPSRGLGENCKWIDMFEDVGMVVFVVSMSDYDQVSEDGTNKMLLTKKLFESIITHPIFENMDFLLILNKYDLLEEKVERVPLARCEWFQDFNPVVSRHRGSNNGNPTLGQLAFHFMAVKFKRFYSSLTGKKLFVSSSKSLDPNSVDSSLKLAMEILKWSEERTNICMSEYSMYSTEPSSFSN.

The disordered stretch occupies residues 98–119 (SVIEHTEEEEEEEGGDGEDCEL). Residues 103–118 (TEEEEEEEGGDGEDCE) are compositionally biased toward acidic residues. The short motif at 205–222 (RRVRVVPVKKQPQTKGKK) is the Nuclear localization signal element. Residues 225 to 268 (CYRCFKGSRFTEKEVCLVCDAKYCNSCVLRAMGSMPEGRKCVTC) form an RING-type; degenerate zinc finger. The G-alpha domain maps to 482–879 (TLQKILLVGN…NICMSEYSMY (398 aa)). The G1 motif stretch occupies residues 485–498 (KILLVGNSGSGTST). GTP contacts are provided by residues 490–498 (GNSGSGTST) and 661–669 (DILYAEGVT). Ca(2+) is bound by residues Ser497 and Thr669. A G2 motif region spans residues 661-669 (DILYAEGVT). The interval 702 to 711 (YQLIRVPSRG) is G3 motif. The interval 770–777 (LLILNKYD) is G4 motif. 774–777 (NKYD) lines the GTP pocket. The segment at 843–848 (SKSLDP) is G5 motif.

It belongs to the G-alpha family. XLG subfamily. Ca(2+) is required as a cofactor. In terms of tissue distribution, ubiquitous. Strongly expressed in vascular tissues, root and shoot meristems and lateral root primordia.

The protein resides in the nucleus. Its function is as follows. Guanine nucleotide-binding proteins (G proteins) are involved as modulators or transducers in various transmembrane signaling systems. Binds GTP with specificity. Plays a role in the root morphogenesis by regulation of the cell proliferation. The protein is Extra-large guanine nucleotide-binding protein 1 (XLG1) of Arabidopsis thaliana (Mouse-ear cress).